The sequence spans 778 residues: Endonuclease MutS2 (778 aa).

Residue G332–T339 participates in ATP binding. One can recognise a Smr domain in the interval I703–K778.

The protein belongs to the DNA mismatch repair MutS family. MutS2 subfamily. In terms of assembly, homodimer. Binds to stalled ribosomes, contacting rRNA.

Endonuclease that is involved in the suppression of homologous recombination and thus may have a key role in the control of bacterial genetic diversity. In terms of biological role, acts as a ribosome collision sensor, splitting the ribosome into its 2 subunits. Detects stalled/collided 70S ribosomes which it binds and splits by an ATP-hydrolysis driven conformational change. Acts upstream of the ribosome quality control system (RQC), a ribosome-associated complex that mediates the extraction of incompletely synthesized nascent chains from stalled ribosomes and their subsequent degradation. Probably generates substrates for RQC. This chain is Endonuclease MutS2, found in Fusobacterium nucleatum subsp. nucleatum (strain ATCC 25586 / DSM 15643 / BCRC 10681 / CIP 101130 / JCM 8532 / KCTC 2640 / LMG 13131 / VPI 4355).